The following is a 459-amino-acid chain: MLDTDTITAISTPVGEGAIAIVRLSGSEAITITSQIFEGKNLQEVPSHTIQYGKIIDPGTNEVAEEVMVSIMRGPKTFTREDVVEINCHGGMVAVNRVLEIVLAKGVRLAEPGEFTKRAFLHGRIDLSQAEAVMDLIRAKTDKAMSVALKQMDGRLSKLIQKLRQELLETVAHVEVNIDYPEYDDVEEMSHAMMKEKSKEVRDELDKLLQIAQQGKILREGLSTAIIGRPNVGKSSLMNTLVQENKAIVTEIPGTTRDIIEEYVNVRGVPLRLVDTAGIRETEDIVERIGVDRSRQVLKESDLILFVLNYNEPLSEDDKKLFEAVDGLEYIVIINKTDLEQQLDLDEVREFAKDRPVVTTALLEEQGVDELEKAIADTFFTGDIDTGDMTYVSNVRHIQLLKQAKQALEDAMEGIELGMPMDIVQIDVTRSWEFMGEIIGDTASDSLIDQLFSQFCLGK.

Positions 23, 85, and 124 each coordinate (6S)-5-formyl-5,6,7,8-tetrahydrofolate. In terms of domain architecture, TrmE-type G spans 221-380 (GLSTAIIGRP…LEKAIADTFF (160 aa)). A K(+)-binding site is contributed by asparagine 231. GTP contacts are provided by residues 231–236 (NVGKSS), 250–256 (TEIPGTT), and 275–278 (DTAG). Serine 235 is a binding site for Mg(2+). K(+) is bound by residues threonine 250, isoleucine 252, and threonine 255. Residue threonine 256 participates in Mg(2+) binding. Residue lysine 459 participates in (6S)-5-formyl-5,6,7,8-tetrahydrofolate binding.

Belongs to the TRAFAC class TrmE-Era-EngA-EngB-Septin-like GTPase superfamily. TrmE GTPase family. In terms of assembly, homodimer. Heterotetramer of two MnmE and two MnmG subunits. Requires K(+) as cofactor.

It is found in the cytoplasm. Its function is as follows. Exhibits a very high intrinsic GTPase hydrolysis rate. Involved in the addition of a carboxymethylaminomethyl (cmnm) group at the wobble position (U34) of certain tRNAs, forming tRNA-cmnm(5)s(2)U34. This chain is tRNA modification GTPase MnmE, found in Oceanobacillus iheyensis (strain DSM 14371 / CIP 107618 / JCM 11309 / KCTC 3954 / HTE831).